Consider the following 150-residue polypeptide: Large ribosomal subunit protein bL9 (150 aa).

Belongs to the bacterial ribosomal protein bL9 family.

Binds to the 23S rRNA. The polypeptide is Large ribosomal subunit protein bL9 (Delftia acidovorans (strain DSM 14801 / SPH-1)).